Here is a 779-residue protein sequence, read N- to C-terminus: MIDSLNNYNYDVNDSLKVENLTTEDYEEICKRLGRKPNRTELGMFGVMWSEHCCYRNSKPLLANFPTTGKNVLVGPGENAGVIDVGNDQKLVFKIESHNHPSAIEPFQGAATGVGGILRDIFTMGARPIAVLNSLRFGNLDKSSNISLLRGVVSGISHYGNCVGVPTVGGEIYFDDSYSGNPLVNVMALGLLETDEIVCSGAKEVGYPVLYVGNTTGKDGVGGASFASSELNTNSLDNRPAVQVGDPFIEKSLIEACLDAFKTGDVIAAQDMGAAGLTCSSAEMAANGGLGISINLDLVPARENDMTAYQYLLSESQERMLLVVKEEKLNILIEQFKKWGLFANVIGEVISKKEVIISQKNQIVAQIPTSALSDETPINIHKVIKEPPDYLQKKWKWSEDELPIITNNKILSFKDKKQYSLSEIILNLLSNPSIASKSWIYKQYDSQVQSNTVFKPGEADAALLRLRAQDERNKNNNFSGVAASVDCNSRWVLLDPYRGSIAAVAESARNVSCVGAEPLAITNNLNFSSPNTEIGYWQLSSACDGISKACIALETPVTGGNVSLYNESKNKNNQVTPIYPTPVIGMVGKIQNVDKAVSSGWKNINDQIWLIGSYRSESSIGGSSYLDYFHGLITGRPPKINLQDEKYCQTFLRDAISKNYISSSHDISDGGLAIALSECCILSSKGANIQLEEKNARKDNILFSEGGSRIIFSLNKMEETNFLNFVSINNKNFGSNIYVKKIGFVSEANLTINVQDEELCNLRVDELAEKFNNSISNSF.

The active site involves histidine 52. ATP-binding residues include tyrosine 55 and lysine 94. Glutamate 96 contributes to the Mg(2+) binding site. Substrate contacts are provided by residues 97–100 (SHNH) and arginine 119. Histidine 98 (proton acceptor) is an active-site residue. Residue aspartate 120 participates in Mg(2+) binding. Residue glutamine 243 coordinates substrate. Aspartate 271 lines the Mg(2+) pocket. A substrate-binding site is contributed by 315–317 (ESQ). The ATP site is built by asparagine 523 and glycine 560. Asparagine 561 contributes to the Mg(2+) binding site. Residue serine 563 coordinates substrate.

This sequence belongs to the FGAMS family. Monomer. Part of the FGAM synthase complex composed of 1 PurL, 1 PurQ and 2 PurS subunits.

It is found in the cytoplasm. The enzyme catalyses N(2)-formyl-N(1)-(5-phospho-beta-D-ribosyl)glycinamide + L-glutamine + ATP + H2O = 2-formamido-N(1)-(5-O-phospho-beta-D-ribosyl)acetamidine + L-glutamate + ADP + phosphate + H(+). The protein operates within purine metabolism; IMP biosynthesis via de novo pathway; 5-amino-1-(5-phospho-D-ribosyl)imidazole from N(2)-formyl-N(1)-(5-phospho-D-ribosyl)glycinamide: step 1/2. In terms of biological role, part of the phosphoribosylformylglycinamidine synthase complex involved in the purines biosynthetic pathway. Catalyzes the ATP-dependent conversion of formylglycinamide ribonucleotide (FGAR) and glutamine to yield formylglycinamidine ribonucleotide (FGAM) and glutamate. The FGAM synthase complex is composed of three subunits. PurQ produces an ammonia molecule by converting glutamine to glutamate. PurL transfers the ammonia molecule to FGAR to form FGAM in an ATP-dependent manner. PurS interacts with PurQ and PurL and is thought to assist in the transfer of the ammonia molecule from PurQ to PurL. The chain is Phosphoribosylformylglycinamidine synthase subunit PurL from Prochlorococcus marinus (strain MIT 9515).